The following is a 462-amino-acid chain: Argininosuccinate lyase (462 aa).

This sequence belongs to the lyase 1 family. Argininosuccinate lyase subfamily.

Its subcellular location is the cytoplasm. It catalyses the reaction 2-(N(omega)-L-arginino)succinate = fumarate + L-arginine. Its pathway is amino-acid biosynthesis; L-arginine biosynthesis; L-arginine from L-ornithine and carbamoyl phosphate: step 3/3. In Lachnoclostridium phytofermentans (strain ATCC 700394 / DSM 18823 / ISDg) (Clostridium phytofermentans), this protein is Argininosuccinate lyase.